We begin with the raw amino-acid sequence, 445 residues long: MQEKIGLIPRSILRTLDRFRKQLFPNQETKTITLQEFQVSRQQMQVSVVTFLTLVLVPLGVNICGKTFLVKPFTQFLWNNYQTELFLNQFQAQRAFTEMQEIEDVLFFDSLIQNTNFCFNCSKAWNNYFVMQPSSYSSNSNFVIQKPDLANSQSKNSTCHNSKLILQKNVFEIYKFSENTDFFKDKMYGEQIHDGVKNSYNEFSSKASNALSNLEAPLYLGSEASLPPKLKNFDSRIFTANQLNRDDKLIYMSLQEQPLVKKQNFLDKYQFAKHETQENVINKPEIYKIEGLLQTSEKDEMELRQDKLVALAIQYNEESIDAISNLIGDALTCITITFLFFGLKVQILILQSFLTESFYSLSNANRSLIIIIVTDLLVGYHSPQGWKLLTQLILQHYGFPETKLFILCFIGTFPVILDTIFKYWIFRHLNRISPTTVLTYHRMIE.

4 consecutive transmembrane segments (helical) span residues 44-64 (MQVS…VNIC), 330-350 (ALTC…ILIL), 368-388 (LIII…GWKL), and 405-425 (FILC…KYWI).

It belongs to the CemA family.

It is found in the plastid. Its subcellular location is the chloroplast inner membrane. It catalyses the reaction K(+)(in) + H(+)(out) = K(+)(out) + H(+)(in). In terms of biological role, contributes to K(+)/H(+) antiport activity by supporting proton efflux to control proton extrusion and homeostasis in chloroplasts in a light-dependent manner to modulate photosynthesis. Prevents excessive induction of non-photochemical quenching (NPQ) under continuous-light conditions. Indirectly promotes efficient inorganic carbon uptake into chloroplasts. This Pleurastrum terricola (Filamentous green alga) protein is Potassium/proton antiporter CemA.